A 160-amino-acid chain; its full sequence is Large ribosomal subunit protein eL21 (160 aa).

It belongs to the eukaryotic ribosomal protein eL21 family.

The polypeptide is Large ribosomal subunit protein eL21 (RPL21) (Encephalitozoon cuniculi (strain GB-M1) (Microsporidian parasite)).